Reading from the N-terminus, the 527-residue chain is Glutamate--cysteine ligase (527 aa).

The protein belongs to the glutamate--cysteine ligase type 1 family. Type 1 subfamily.

The catalysed reaction is L-cysteine + L-glutamate + ATP = gamma-L-glutamyl-L-cysteine + ADP + phosphate + H(+). The protein operates within sulfur metabolism; glutathione biosynthesis; glutathione from L-cysteine and L-glutamate: step 1/2. The polypeptide is Glutamate--cysteine ligase (Bordetella petrii (strain ATCC BAA-461 / DSM 12804 / CCUG 43448)).